Here is a 740-residue protein sequence, read N- to C-terminus: Catalase-peroxidase (740 aa).

Basic and acidic residues predominate over residues 1–16 (MSENHDAIVTDAKTEE). The segment at 1 to 38 (MSENHDAIVTDAKTEETDGCPVAHGRAPHPTQGGGNRQ) is disordered. A cross-link (tryptophyl-tyrosyl-methioninium (Trp-Tyr) (with M-257)) is located at residues 108-231 (WHSAGTYRIS…LGAVQMGLIY (124 aa)). Catalysis depends on histidine 109, which acts as the Proton acceptor. The tryptophyl-tyrosyl-methioninium (Tyr-Met) (with W-108) cross-link spans 231-257 (YVNPEGPNGNPDPIAAARDIRETFRRM). Histidine 272 contributes to the heme b binding site.

It belongs to the peroxidase family. Peroxidase/catalase subfamily. As to quaternary structure, homodimer. The cofactor is heme b. Post-translationally, formation of the three residue Trp-Tyr-Met cross-link is important for the catalase, but not the peroxidase activity of the enzyme.

The catalysed reaction is H2O2 + AH2 = A + 2 H2O. It catalyses the reaction 2 H2O2 = O2 + 2 H2O. Functionally, bifunctional enzyme with both catalase and broad-spectrum peroxidase activity. This Streptomyces coelicolor (strain ATCC BAA-471 / A3(2) / M145) protein is Catalase-peroxidase.